The chain runs to 813 residues: Tax1-binding protein 1 homolog (813 aa).

Phosphoserine is present on residues S124, S138, and S225. Residues 144–627 (TTKAGLLELK…LENQAERKME (484 aa)) adopt a coiled-coil conformation. The tract at residues 320-420 (EEIGRLQLCL…ELKLNAMKKD (101 aa)) is oligomerization. A compositionally biased stretch (polar residues) spans 489 to 502 (DASVNTDPATSAST). Residues 489–508 (DASVNTDPATSASTVDVKPS) form a disordered region. 3 positions are modified to phosphoserine: S617, S633, and S690. Residues 663-738 (YASQETRDGA…DPPSQHLRGH (76 aa)) form a disordered region. UBZ1-type zinc fingers lie at residues 751-777 (HKKC…VESH) and 778-804 (WKVC…VQTH). Residues C754, C757, H773, H777, C781, C784, H800, and H804 each coordinate Zn(2+).

Homooligomer. Interacts with TNFAIP3. Interacts with STARD13. Interacts with MYO6. Interacts with TOM1; the interaction is indirect and is mediated by MYO6, which acts as a bridge between TOM1 and TAX1BP1. Interacts with MAVS; this interaction induces MAVS polyubiquitination. Interacts with TNIP1. Interacts with TRAF6; this interaction mediates deubiquitination of TRAF6 and inhibition of NF-kappa-B activation. Interacts with RIPK1; this interaction negatively regulates RIPK1 ubiquitination. Interacts with NBR1. Interacts with TBK1. Interacts with RB1CC1. Interacts with SQSTM1. Interacts with AZI2.

The protein localises to the cytoplasm. It is found in the mitochondrion. The protein resides in the preautophagosomal structure. Its subcellular location is the cytoplasmic vesicle. It localises to the autophagosome. Functionally, ubiquitin-binding adapter that participates in inflammatory, antiviral and innate immune processes as well as selective autophagy regulation. Plays a key role in the negative regulation of NF-kappa-B and IRF3 signalings by acting as an adapter for the ubiquitin-editing enzyme A20/TNFAIP3 to bind and inactivate its substrates. Disrupts the interactions between the E3 ubiquitin ligase TRAF3 and TBK1/IKBKE to attenuate 'Lys63'-linked polyubiquitination of TBK1 and thereby IFN-beta production. Also recruits A20/TNFAIP3 to ubiquitinated signaling proteins TRAF6 and RIPK1, leading to their deubiquitination and disruption of IL-1 and TNF-induced NF-kappa-B signaling pathways. Inhibits virus-induced apoptosis by inducing the 'Lys-48'-linked polyubiquitination and degradation of MAVS via recruitment of the E3 ligase ITCH, thereby attenuating MAVS-mediated apoptosis signaling. As a macroautophagy/autophagy receptor, facilitates the xenophagic clearance of pathogenic bacteria such as Salmonella typhimurium and Mycobacterium tuberculosis. Upon NBR1 recruitment to the SQSTM1-ubiquitin condensates, acts as the major recruiter of RB1CC1 to these ubiquitin condensates to promote their autophagic degradation. The polypeptide is Tax1-binding protein 1 homolog (TAX1BP1) (Pongo abelii (Sumatran orangutan)).